Here is a 252-residue protein sequence, read N- to C-terminus: 2-succinyl-6-hydroxy-2,4-cyclohexadiene-1-carboxylate synthase (252 aa).

This sequence belongs to the AB hydrolase superfamily. MenH family. As to quaternary structure, monomer.

It carries out the reaction 5-enolpyruvoyl-6-hydroxy-2-succinyl-cyclohex-3-ene-1-carboxylate = (1R,6R)-6-hydroxy-2-succinyl-cyclohexa-2,4-diene-1-carboxylate + pyruvate. It functions in the pathway quinol/quinone metabolism; 1,4-dihydroxy-2-naphthoate biosynthesis; 1,4-dihydroxy-2-naphthoate from chorismate: step 3/7. It participates in quinol/quinone metabolism; menaquinone biosynthesis. In terms of biological role, catalyzes a proton abstraction reaction that results in 2,5-elimination of pyruvate from 2-succinyl-5-enolpyruvyl-6-hydroxy-3-cyclohexene-1-carboxylate (SEPHCHC) and the formation of 2-succinyl-6-hydroxy-2,4-cyclohexadiene-1-carboxylate (SHCHC). This Salmonella choleraesuis (strain SC-B67) protein is 2-succinyl-6-hydroxy-2,4-cyclohexadiene-1-carboxylate synthase.